Consider the following 470-residue polypeptide: Neuraminidase (470 aa).

Residues 1-14 are Intravirion-facing; that stretch reads MNPNQKIITIGSIS. An involved in apical transport and lipid raft association region spans residues 11-32; it reads GSISLGLVVFNVLLHVVSIIVT. The helical transmembrane segment at 15 to 35 threads the bilayer; that stretch reads LGLVVFNVLLHVVSIIVTVLV. Positions 32-86 are hypervariable stalk region; it reads TVLVLGRGGKNRICNETVVREYNETVRIEKVTQWHNTNVIEYVPYWNEGTYMNNT. Residues 36–470 lie on the Virion surface side of the membrane; that stretch reads LGRGGKNRIC…AILPFDIDKM (435 aa). Asn-46, Asn-54, and Asn-84 each carry an N-linked (GlcNAc...) asparagine; by host glycan. The interval 89-470 is head of neuraminidase; that stretch reads ICDVKGFAPF…AILPFDIDKM (382 aa). Intrachain disulfides connect Cys-90–Cys-417, Cys-122–Cys-127, Cys-182–Cys-229, Cys-231–Cys-236, Cys-277–Cys-290, Cys-279–Cys-288, Cys-316–Cys-335, and Cys-421–Cys-446. Substrate is bound at residue Arg-116. A glycan (N-linked (GlcNAc...) asparagine; by host) is linked at Asn-144. Asp-149 serves as the catalytic Proton donor/acceptor. Position 150 (Arg-150) interacts with substrate. Residue 275–276 coordinates substrate; it reads EE. Arg-291 is a binding site for substrate. Residue Asp-292 coordinates Ca(2+). N-linked (GlcNAc...) asparagine; by host glycosylation is present at Asn-293. Ca(2+) is bound by residues Gly-296 and Asp-322. Arg-368 contributes to the substrate binding site. The N-linked (GlcNAc...) asparagine; by host glycan is linked to Asn-398. Tyr-402 (nucleophile) is an active-site residue.

The protein belongs to the glycosyl hydrolase 34 family. In terms of assembly, homotetramer. Ca(2+) is required as a cofactor. In terms of processing, N-glycosylated.

It is found in the virion membrane. The protein localises to the host apical cell membrane. The enzyme catalyses Hydrolysis of alpha-(2-&gt;3)-, alpha-(2-&gt;6)-, alpha-(2-&gt;8)- glycosidic linkages of terminal sialic acid residues in oligosaccharides, glycoproteins, glycolipids, colominic acid and synthetic substrates.. Its activity is regulated as follows. Inhibited by the neuraminidase inhibitors zanamivir (Relenza) and oseltamivir (Tamiflu). These drugs interfere with the release of progeny virus from infected cells and are effective against all influenza strains. Resistance to neuraminidase inhibitors is quite rare. Catalyzes the removal of terminal sialic acid residues from viral and cellular glycoconjugates. Cleaves off the terminal sialic acids on the glycosylated HA during virus budding to facilitate virus release. Additionally helps virus spread through the circulation by further removing sialic acids from the cell surface. These cleavages prevent self-aggregation and ensure the efficient spread of the progeny virus from cell to cell. Otherwise, infection would be limited to one round of replication. Described as a receptor-destroying enzyme because it cleaves a terminal sialic acid from the cellular receptors. May facilitate viral invasion of the upper airways by cleaving the sialic acid moieties on the mucin of the airway epithelial cells. Likely to plays a role in the budding process through its association with lipid rafts during intracellular transport. May additionally display a raft-association independent effect on budding. Plays a role in the determination of host range restriction on replication and virulence. Sialidase activity in late endosome/lysosome traffic seems to enhance virus replication. The polypeptide is Neuraminidase (Influenza A virus (strain A/Equine/Jillin/1/1989 H3N8)).